The sequence spans 212 residues: Eggshell protein 1 (212 aa).

The N-terminal stretch at 1 to 27 is a signal peptide; that stretch reads MKSSLTLLFLAAIGYTIAYPPPSDYDS. Residues 155–212 are disordered; that stretch reads RKNGHGKGGKGGNGGGGGKGGGKGGGNGKGNGKGGGGKNGGGKGGNGGKGGSYAPSYY. Gly residues predominate over residues 163–205; sequence GKGGNGGGGGKGGGKGGGNGKGNGKGGGGKNGGGKGGNGGKGG.

In terms of tissue distribution, detected only in mature female parasites.

The polypeptide is Eggshell protein 1 (ESG-1) (Schistosoma japonicum (Blood fluke)).